Here is a 91-residue protein sequence, read N- to C-terminus: uncharacterized protein (91 aa).

2 helical membrane-spanning segments follow: residues 5–27 and 47–69; these read FFKY…TNFQ and DFYH…FIFF.

The protein resides in the cell membrane. This is an uncharacterized protein from Archaeoglobus fulgidus (strain ATCC 49558 / DSM 4304 / JCM 9628 / NBRC 100126 / VC-16).